We begin with the raw amino-acid sequence, 699 residues long: Elongation factor G (699 aa).

A tr-type G domain is found at 8 to 288 (EDYRNFGIMA…AVCEYLPSPL (281 aa)). GTP is bound by residues 17-24 (AHIDAGKT), 86-90 (DTPGH), and 140-143 (NKMD).

The protein belongs to the TRAFAC class translation factor GTPase superfamily. Classic translation factor GTPase family. EF-G/EF-2 subfamily.

It localises to the cytoplasm. Catalyzes the GTP-dependent ribosomal translocation step during translation elongation. During this step, the ribosome changes from the pre-translocational (PRE) to the post-translocational (POST) state as the newly formed A-site-bound peptidyl-tRNA and P-site-bound deacylated tRNA move to the P and E sites, respectively. Catalyzes the coordinated movement of the two tRNA molecules, the mRNA and conformational changes in the ribosome. This Allorhizobium ampelinum (strain ATCC BAA-846 / DSM 112012 / S4) (Agrobacterium vitis (strain S4)) protein is Elongation factor G.